We begin with the raw amino-acid sequence, 413 residues long: Arginine biosynthesis bifunctional protein ArgJ (413 aa).

Residues threonine 163, lysine 189, threonine 200, glutamate 286, asparagine 408, and threonine 413 each contribute to the substrate site. Threonine 200 functions as the Nucleophile in the catalytic mechanism.

This sequence belongs to the ArgJ family. Heterotetramer of two alpha and two beta chains.

The protein localises to the cytoplasm. It catalyses the reaction N(2)-acetyl-L-ornithine + L-glutamate = N-acetyl-L-glutamate + L-ornithine. The enzyme catalyses L-glutamate + acetyl-CoA = N-acetyl-L-glutamate + CoA + H(+). Its pathway is amino-acid biosynthesis; L-arginine biosynthesis; L-ornithine and N-acetyl-L-glutamate from L-glutamate and N(2)-acetyl-L-ornithine (cyclic): step 1/1. It participates in amino-acid biosynthesis; L-arginine biosynthesis; N(2)-acetyl-L-ornithine from L-glutamate: step 1/4. Catalyzes two activities which are involved in the cyclic version of arginine biosynthesis: the synthesis of N-acetylglutamate from glutamate and acetyl-CoA as the acetyl donor, and of ornithine by transacetylation between N(2)-acetylornithine and glutamate. The sequence is that of Arginine biosynthesis bifunctional protein ArgJ from Staphylococcus aureus (strain COL).